We begin with the raw amino-acid sequence, 118 residues long: Fluoride-specific ion channel FluC 1 (118 aa).

Transmembrane regions (helical) follow at residues 5-25 (FLLV…ISIF), 39-59 (FFIN…ALGP), 61-81 (WQLF…TFKV), and 98-118 (YVGL…MLGV). Positions 71 and 74 each coordinate Na(+).

Belongs to the fluoride channel Fluc/FEX (TC 1.A.43) family.

It localises to the cell membrane. The enzyme catalyses fluoride(in) = fluoride(out). Its activity is regulated as follows. Na(+) is not transported, but it plays an essential structural role and its presence is essential for fluoride channel function. Fluoride-specific ion channel. Important for reducing fluoride concentration in the cell, thus reducing its toxicity. The sequence is that of Fluoride-specific ion channel FluC 1 from Listeria innocua serovar 6a (strain ATCC BAA-680 / CLIP 11262).